Reading from the N-terminus, the 429-residue chain is Glucose-6-phosphate isomerase (429 aa).

Glu-282 (proton donor) is an active-site residue. Residues His-303 and Lys-418 contribute to the active site.

It belongs to the GPI family.

The protein localises to the cytoplasm. The enzyme catalyses alpha-D-glucose 6-phosphate = beta-D-fructose 6-phosphate. The protein operates within carbohydrate biosynthesis; gluconeogenesis. It functions in the pathway carbohydrate degradation; glycolysis; D-glyceraldehyde 3-phosphate and glycerone phosphate from D-glucose: step 2/4. Functionally, catalyzes the reversible isomerization of glucose-6-phosphate to fructose-6-phosphate. The polypeptide is Glucose-6-phosphate isomerase (Mesomycoplasma hyopneumoniae (strain J / ATCC 25934 / NCTC 10110) (Mycoplasma hyopneumoniae)).